Consider the following 189-residue polypeptide: MKTGKELKPGTVLRIDNDPWLVQKAEFTKSGRNSAIMKTKLKNLLTGYKTETVYGADDKLDDVILDRKEATLSFISGDSYTFMDTTDYTMYELNAEDIDAVLPYIEEGMEDICEAVFFEGRLVSVELPTTISRQVVYTENAARGDTSGKVMKPAKLKNGTEIQVADFIQIDEWIDIDTRDNSFKGRSKK.

The protein belongs to the elongation factor P family.

The protein localises to the cytoplasm. Its pathway is protein biosynthesis; polypeptide chain elongation. Functionally, involved in peptide bond synthesis. Stimulates efficient translation and peptide-bond synthesis on native or reconstituted 70S ribosomes in vitro. Probably functions indirectly by altering the affinity of the ribosome for aminoacyl-tRNA, thus increasing their reactivity as acceptors for peptidyl transferase. This chain is Elongation factor P, found in Pseudomonas putida (strain GB-1).